The chain runs to 430 residues: Potassium channel subfamily K member 12 (430 aa).

The Cytoplasmic portion of the chain corresponds to 1–38 (MSSRSPRPPPRRCRRRLPRPSCCCCCCRRSHLNEDTGR). Residues 11–16 (RRCRRR) form an ER retention/retrieval signal region. Residues 39–59 (FVLLAALIGLYLVAGATVFSA) form a helical membrane-spanning segment. Asparagine 78 is a glycosylation site (N-linked (GlcNAc...) asparagine). The pore-forming intramembrane region spans 114–134 (WDFPGAFYFVGTVVSTIGFGM). K(+)-binding residues include threonine 129, isoleucine 130, and glycine 131. The selectivity filter 1 stretch occupies residues 129 to 134 (TIGFGM). Residues 145–165 (FLIAYGLFGCAGTILFFNLFL) traverse the membrane as a helical segment. Residues 166-212 (ERIISLLAFIMRACRERQLRRSGLLPATFRRGSALSEADSLAGWKPS) are Cytoplasmic-facing. The chain crosses the membrane as a helical span at residues 213–233 (VYHVLLILGLFAVLLACCASA). An intramembrane region (pore-forming) is located at residues 243–263 (YVDSLYFCFVTFSTIGFGDLV). Positions 256, 257, 258, and 259 each coordinate K(+). The segment at 256 to 261 (TIGFGD) is selectivity filter 2. A helical membrane pass occupies residues 282-302 (LFILLGVCCIYSLFNVISILI). The Cytoplasmic portion of the chain corresponds to 303–430 (KQVLNWMLRK…NRLAETSASR (128 aa)).

The protein belongs to the two pore domain potassium channel (TC 1.A.1.8) family. In terms of assembly, homodimer. Heterodimer with KCNK13. As to expression, highly expressed in most brain regions. Also expressed in other tissues such as lung, kidney, liver, stomach and spleen.

It localises to the cell membrane. It is found in the endoplasmic reticulum membrane. It carries out the reaction K(+)(in) = K(+)(out). Its function is as follows. K(+) channel subunit that may homo- and heterodimerize to form functional channels with distinct regulatory and gating properties. Can heterodimerize with KCNK13 subunit to conduct K(+) outward rectifying currents at the plasma membrane. The homodimers are mainly retained in the endoplasmic reticulum compartment and may be targeted to the cell surface upon phosphorylation or other activation signals yet to be elucidated. This is Potassium channel subfamily K member 12 (Kcnk12) from Rattus norvegicus (Rat).